Consider the following 185-residue polypeptide: Lysozyme g (185 aa).

The active site involves glutamate 73.

This sequence belongs to the glycosyl hydrolase 23 family.

The catalysed reaction is Hydrolysis of (1-&gt;4)-beta-linkages between N-acetylmuramic acid and N-acetyl-D-glucosamine residues in a peptidoglycan and between N-acetyl-D-glucosamine residues in chitodextrins.. In Cyprinus carpio (Common carp), this protein is Lysozyme g.